The following is a 163-amino-acid chain: Nucleotide-binding protein YPDSF_2805 (163 aa).

Belongs to the YajQ family.

Its function is as follows. Nucleotide-binding protein. The protein is Nucleotide-binding protein YPDSF_2805 of Yersinia pestis (strain Pestoides F).